We begin with the raw amino-acid sequence, 516 residues long: mRNA export factor ICP27 homolog (516 aa).

4 residues coordinate Zn(2+): C231, H336, C338, and C343. Residues 231–343 form a CHC2-type zinc finger; sequence CVFNDNGHGD…SNHKCDDVSC (113 aa). A compositionally biased stretch (polar residues) spans 399–409; the sequence is YSTSRDLPQTS. The tract at residues 399-423 is disordered; the sequence is YSTSRDLPQTSHRSHKNQGTPKVKS.

It belongs to the HHV-1 ICP27 protein family.

The protein localises to the virion tegument. It localises to the virion. The protein resides in the host nucleus. Its subcellular location is the host cytoplasm. Functionally, immediate early (EI) protein that plays many roles during productive infection including regulation of viral gene expression and nuclear export of intronless viral RNAs. This Homo sapiens (Human) protein is mRNA export factor ICP27 homolog.